Here is a 187-residue protein sequence, read N- to C-terminus: Apolipophorin-3 (187 aa).

Positions 1 to 17 are cleaved as a signal peptide; sequence MAAKFIILLALFALSQA. Residues 18–22 constitute a propeptide that is removed on maturation; that stretch reads SVVRR.

It belongs to the insect apolipophorin-3 family. In terms of assembly, equilibrium between a soluble monomer and a bound lipoprotein form. Apolipophorin-3 associates with lipophorin during lipid loading until each particle contains 9 or 14 molecules of apolipophorin-3. In terms of tissue distribution, hemolymph.

It localises to the secreted. Its function is as follows. Assists in the loading of diacylglycerol, generated from triacylglycerol stores in the fat body through the action of adipokinetic hormone, into lipophorin, the hemolymph lipoprotein. It increases the lipid carrying capacity of lipophorin by covering the expanding hydrophobic surface resulting from diacylglycerol uptake. It thus plays a critical role in the transport of lipids during flight in several species of insects. This Hyphantria cunea (Fall webworm moth) protein is Apolipophorin-3.